Reading from the N-terminus, the 526-residue chain is GMP synthase [glutamine-hydrolyzing] (526 aa).

The Glutamine amidotransferase type-1 domain maps to 13–204 (TVLVVDFGAQ…LYRGAGLSPD (192 aa)). Cys-90 (nucleophile) is an active-site residue. Residues His-178 and Glu-180 contribute to the active site. Positions 205–400 (WTTGNVIEEQ…LGLPDEIVQR (196 aa)) constitute a GMPS ATP-PPase domain. 232–238 (SGGVDSA) lines the ATP pocket.

In terms of assembly, homodimer.

The enzyme catalyses XMP + L-glutamine + ATP + H2O = GMP + L-glutamate + AMP + diphosphate + 2 H(+). It functions in the pathway purine metabolism; GMP biosynthesis; GMP from XMP (L-Gln route): step 1/1. Catalyzes the synthesis of GMP from XMP. This chain is GMP synthase [glutamine-hydrolyzing] (guaA), found in Streptomyces coelicolor (strain ATCC BAA-471 / A3(2) / M145).